A 331-amino-acid chain; its full sequence is Ketol-acid reductoisomerase (NADP(+)) (331 aa).

One can recognise a KARI N-terminal Rossmann domain in the interval 2–182; that stretch reads ARMYYDADAQ…GGTRAGILET (181 aa). Residues 25-28, Ser-51, Ser-53, and 83-86 contribute to the NADP(+) site; these read YGSQ and DEVQ. His-108 is an active-site residue. Gly-134 is an NADP(+) binding site. The KARI C-terminal knotted domain maps to 183–328; that stretch reads TFREETETDL…QELRSMFSWL (146 aa). Asp-191, Glu-195, Glu-227, and Glu-231 together coordinate Mg(2+). Ser-252 contacts substrate.

This sequence belongs to the ketol-acid reductoisomerase family. Requires Mg(2+) as cofactor.

It catalyses the reaction (2R)-2,3-dihydroxy-3-methylbutanoate + NADP(+) = (2S)-2-acetolactate + NADPH + H(+). It carries out the reaction (2R,3R)-2,3-dihydroxy-3-methylpentanoate + NADP(+) = (S)-2-ethyl-2-hydroxy-3-oxobutanoate + NADPH + H(+). It functions in the pathway amino-acid biosynthesis; L-isoleucine biosynthesis; L-isoleucine from 2-oxobutanoate: step 2/4. It participates in amino-acid biosynthesis; L-valine biosynthesis; L-valine from pyruvate: step 2/4. In terms of biological role, involved in the biosynthesis of branched-chain amino acids (BCAA). Catalyzes an alkyl-migration followed by a ketol-acid reduction of (S)-2-acetolactate (S2AL) to yield (R)-2,3-dihydroxy-isovalerate. In the isomerase reaction, S2AL is rearranged via a Mg-dependent methyl migration to produce 3-hydroxy-3-methyl-2-ketobutyrate (HMKB). In the reductase reaction, this 2-ketoacid undergoes a metal-dependent reduction by NADPH to yield (R)-2,3-dihydroxy-isovalerate. The polypeptide is Ketol-acid reductoisomerase (NADP(+)) (Thermosynechococcus vestitus (strain NIES-2133 / IAM M-273 / BP-1)).